A 523-amino-acid chain; its full sequence is Ribonuclease Y (523 aa).

A helical membrane pass occupies residues 7-24 (LSSLASALLAGGGTYLVY). A KH domain is found at 213-279 (LINVVNLPND…TRTIEALVED (67 aa)). The region spanning 339 to 432 (ALGHSLEVAN…VCAADALSAA (94 aa)) is the HD domain.

Belongs to the RNase Y family.

Its subcellular location is the cell membrane. In terms of biological role, endoribonuclease that initiates mRNA decay. The polypeptide is Ribonuclease Y (Wolinella succinogenes (strain ATCC 29543 / DSM 1740 / CCUG 13145 / JCM 31913 / LMG 7466 / NCTC 11488 / FDC 602W) (Vibrio succinogenes)).